A 338-amino-acid chain; its full sequence is 3-dehydroquinate synthase (338 aa).

It belongs to the archaeal-type DHQ synthase family.

It catalyses the reaction 2-amino-2,3,7-trideoxy-D-lyxo-hept-6-ulosonate + NAD(+) + H2O = 3-dehydroquinate + NH4(+) + NADH + H(+). Its function is as follows. Catalyzes the oxidative deamination and cyclization of 2-amino-3,7-dideoxy-D-threo-hept-6-ulosonic acid (ADH) to yield 3-dehydroquinate (DHQ), which is fed into the canonical shikimic pathway of aromatic amino acid biosynthesis. In Cenarchaeum symbiosum (strain A), this protein is 3-dehydroquinate synthase.